We begin with the raw amino-acid sequence, 309 residues long: Mitochondrial substrate carrier family protein ancA (309 aa).

3 Solcar repeats span residues 10-102, 114-203, and 216-299; these read SSFV…YKKF, KFFI…AKGI, and ASWG…IQKL. Helical transmembrane passes span 12 to 41, 79 to 103, 113 to 133, 181 to 201, and 215 to 235; these read FVKDSLIGGTAGGVSKTIVAPIERVKLLLQ, LANVIRYFPTQALNFAFKDKYKKFF, TKFFIGNLLSGGAAGATSLLF, VSVGGIFVYRAAFFGGYDTAK, and WASWGIAQVVTTIAGVVSYPF. 2 residues coordinate ADP: Arg84 and Lys96. An ADP-binding site is contributed by Arg239. Residues 239–244 are important for transport activity; it reads RRRMMM. Residues 239–244 carry the Nucleotide carrier signature motif motif; sequence RRRMMM. Residues 276–293 traverse the membrane as a helical segment; the sequence is ALSNAIRGSGGALVLVIY.

This sequence belongs to the mitochondrial carrier (TC 2.A.29) family. As to quaternary structure, monomer.

It is found in the mitochondrion inner membrane. It catalyses the reaction ADP(in) + ATP(out) = ADP(out) + ATP(in). The matrix-open state (m-state) is inhibited by the membrane-permeable bongkrekic acid (BKA). The cytoplasmic-open state (c-state) is inhibited by the membrane-impermeable toxic inhibitor carboxyatractyloside (CATR). In terms of biological role, ADP:ATP antiporter that mediates import of ADP into the mitochondrial matrix for ATP synthesis, and export of ATP out to fuel the cell. Cycles between the cytoplasmic-open state (c-state) and the matrix-open state (m-state): operates by the alternating access mechanism with a single substrate-binding site intermittently exposed to either the cytosolic (c-state) or matrix (m-state) side of the inner mitochondrial membrane. The chain is Mitochondrial substrate carrier family protein ancA (ancA) from Dictyostelium discoideum (Social amoeba).